A 40-amino-acid polypeptide reads, in one-letter code: Photosystem II reaction center protein J (40 aa).

The helical transmembrane segment at 8–28 threads the bilayer; it reads IPLWIIGTVAGILVIGLVGIF.

Belongs to the PsbJ family. PSII is composed of 1 copy each of membrane proteins PsbA, PsbB, PsbC, PsbD, PsbE, PsbF, PsbH, PsbI, PsbJ, PsbK, PsbL, PsbM, PsbT, PsbX, PsbY, PsbZ, Psb30/Ycf12, at least 3 peripheral proteins of the oxygen-evolving complex and a large number of cofactors. It forms dimeric complexes.

The protein localises to the plastid. The protein resides in the chloroplast thylakoid membrane. One of the components of the core complex of photosystem II (PSII). PSII is a light-driven water:plastoquinone oxidoreductase that uses light energy to abstract electrons from H(2)O, generating O(2) and a proton gradient subsequently used for ATP formation. It consists of a core antenna complex that captures photons, and an electron transfer chain that converts photonic excitation into a charge separation. In Spinacia oleracea (Spinach), this protein is Photosystem II reaction center protein J.